Reading from the N-terminus, the 116-residue chain is NADH-ubiquinone oxidoreductase chain 3 (116 aa).

3 consecutive transmembrane segments (helical) span residues 4–24 (LIIT…IAFW), 56–76 (FFLV…LLPL), and 88–108 (TLIL…YEWI).

It belongs to the complex I subunit 3 family. Core subunit of respiratory chain NADH dehydrogenase (Complex I) which is composed of 45 different subunits. Interacts with TMEM186. Interacts with TMEM242.

It localises to the mitochondrion inner membrane. It carries out the reaction a ubiquinone + NADH + 5 H(+)(in) = a ubiquinol + NAD(+) + 4 H(+)(out). Its function is as follows. Core subunit of the mitochondrial membrane respiratory chain NADH dehydrogenase (Complex I) which catalyzes electron transfer from NADH through the respiratory chain, using ubiquinone as an electron acceptor. Essential for the catalytic activity of complex I. In Didelphis virginiana (North American opossum), this protein is NADH-ubiquinone oxidoreductase chain 3.